The following is a 219-amino-acid chain: Probable nicotinate-nucleotide adenylyltransferase (219 aa).

The protein belongs to the NadD family.

It catalyses the reaction nicotinate beta-D-ribonucleotide + ATP + H(+) = deamido-NAD(+) + diphosphate. It participates in cofactor biosynthesis; NAD(+) biosynthesis; deamido-NAD(+) from nicotinate D-ribonucleotide: step 1/1. In terms of biological role, catalyzes the reversible adenylation of nicotinate mononucleotide (NaMN) to nicotinic acid adenine dinucleotide (NaAD). The sequence is that of Probable nicotinate-nucleotide adenylyltransferase from Chromohalobacter salexigens (strain ATCC BAA-138 / DSM 3043 / CIP 106854 / NCIMB 13768 / 1H11).